The sequence spans 97 residues: Exodeoxyribonuclease 7 small subunit (97 aa).

Residues 1-22 (MAKTASPGATPPGNGTEPLPDN) are disordered.

The protein belongs to the XseB family. As to quaternary structure, heterooligomer composed of large and small subunits.

It localises to the cytoplasm. It carries out the reaction Exonucleolytic cleavage in either 5'- to 3'- or 3'- to 5'-direction to yield nucleoside 5'-phosphates.. Functionally, bidirectionally degrades single-stranded DNA into large acid-insoluble oligonucleotides, which are then degraded further into small acid-soluble oligonucleotides. The protein is Exodeoxyribonuclease 7 small subunit of Burkholderia lata (strain ATCC 17760 / DSM 23089 / LMG 22485 / NCIMB 9086 / R18194 / 383).